A 125-amino-acid chain; its full sequence is MAVYAKDLDNNKELNQKLINDQLKIIDTLLLAEKKNFLVYELPAPFDFSSGDPLASQRDIYYAIIKSLEERGFTVKICMKGDRALLFITWKKIQSIEINKKEEYLRMHFIQDEEKAFYCKFLESR.

The protein belongs to the asfivirus B125R family.

This is an uncharacterized protein from Ornithodoros (relapsing fever ticks).